Reading from the N-terminus, the 456-residue chain is B-cell linker protein (456 aa).

The disordered stretch occupies residues 36 to 301; the sequence is IKKLKVKAPP…QSPVFPPAQK (266 aa). Over residues 57-74 the composition is skewed to acidic residues; the sequence is PADEEEQWSDDFDSDYEN. Phosphotyrosine; by SYK occurs at positions 72, 84, 96, 178, and 189. Positions 173 to 187 are enriched in acidic residues; the sequence is EDEADYVVPVEDNDE. Over residues 212 to 226 the composition is skewed to low complexity; the sequence is PNSSTPASPPGTASG. Over residues 236-245 the composition is skewed to pro residues; it reads SPPPAAPSPL. Residues 251–260 are compositionally biased toward low complexity; that stretch reads KPTTPLKTTP. Positions 271 to 289 are enriched in basic and acidic residues; sequence CEEKPIPAERHRGSSHRQE. Residues 346–453 form the SH2 domain; that stretch reads WYAGACDRKS…KDSTRLKYAV (108 aa).

Associates with PLCG1, VAV1 and NCK1 in a B-cell antigen receptor-dependent fashion. Interacts with VAV3, PLCG2 and GRB2. Interacts through its SH2 domain with CD79A. Interacts (via SH2 domain) with SYK; phosphorylated and activated by SYK. Interacts (via SH2 domain) with SCIMP; this interaction is dependent on phosphorylation of SCIMP 'Tyr-131'. Post-translationally, following BCR activation, phosphorylated on tyrosine residues by SYK and LYN. When phosphorylated, serves as a scaffold to assemble downstream targets of antigen activation, including PLCG1, VAV1, GRB2 and NCK1. Phosphorylation of Tyr-84, Tyr-178 and Tyr-189 facilitates PLCG1 binding. Phosphorylation of Tyr-96 facilitates BTK binding. Phosphorylation of Tyr-72 facilitates VAV1 and NCK1 binding. Phosphorylation is required for both Ca(2+) and MAPK signaling pathways. As to expression, expressed in B-cell lineage and fibroblast cell lines (at protein level). Highest levels of expression in the spleen, with lower levels in the liver, kidney, pancreas, small intestines and colon.

The protein resides in the cytoplasm. It localises to the cell membrane. In terms of biological role, functions as a central linker protein, downstream of the B-cell receptor (BCR), bridging the SYK kinase to a multitude of signaling pathways and regulating biological outcomes of B-cell function and development. Plays a role in the activation of ERK/EPHB2, MAP kinase p38 and JNK. Modulates AP1 activation. Important for the activation of NF-kappa-B and NFAT. Plays an important role in BCR-mediated PLCG1 and PLCG2 activation and Ca(2+) mobilization and is required for trafficking of the BCR to late endosomes. However, does not seem to be required for pre-BCR-mediated activation of MAP kinase and phosphatidyl-inositol 3 (PI3) kinase signaling. May be required for the RAC1-JNK pathway. Plays a critical role in orchestrating the pro-B cell to pre-B cell transition. May play an important role in BCR-induced B-cell apoptosis. This chain is B-cell linker protein (BLNK), found in Homo sapiens (Human).